The following is a 158-amino-acid chain: Phosphopantetheine adenylyltransferase (158 aa).

Residue Thr-10 participates in substrate binding. ATP contacts are provided by residues 10–11 and His-18; that span reads TF. Substrate contacts are provided by Lys-42, Leu-74, and Arg-88. Residues 89–91, Glu-99, and 124–130 each bind ATP; these read GLR and NSFISST.

It belongs to the bacterial CoaD family. In terms of assembly, homohexamer. The cofactor is Mg(2+).

It is found in the cytoplasm. It carries out the reaction (R)-4'-phosphopantetheine + ATP + H(+) = 3'-dephospho-CoA + diphosphate. It participates in cofactor biosynthesis; coenzyme A biosynthesis; CoA from (R)-pantothenate: step 4/5. Its function is as follows. Reversibly transfers an adenylyl group from ATP to 4'-phosphopantetheine, yielding dephospho-CoA (dPCoA) and pyrophosphate. This chain is Phosphopantetheine adenylyltransferase, found in Shewanella sediminis (strain HAW-EB3).